The following is a 479-amino-acid chain: uncharacterized protein (479 aa).

The interval 180 to 203 (LGGEHSDSTNTELANPSSTTTRIT) is disordered. Over residues 187–202 (STNTELANPSSTTTRI) the composition is skewed to polar residues. The PE-PPE domain maps to 240–462 (PGTTPEVVSY…LKPLVDAGYS (223 aa)).

The protein belongs to the mycobacterial PPE family.

This is an uncharacterized protein from Mycobacterium tuberculosis (strain CDC 1551 / Oshkosh).